A 306-amino-acid chain; its full sequence is Pseudouridine-5'-phosphate glycosidase (306 aa).

Glutamate 28 functions as the Proton donor in the catalytic mechanism. Residues lysine 89 and valine 109 each coordinate substrate. Aspartate 139 is a binding site for Mn(2+). 141–143 (SAD) is a substrate binding site. Lysine 160 serves as the catalytic Nucleophile.

It belongs to the pseudouridine-5'-phosphate glycosidase family. In terms of assembly, homotrimer. The cofactor is Mn(2+).

It carries out the reaction D-ribose 5-phosphate + uracil = psi-UMP + H2O. In terms of biological role, catalyzes the reversible cleavage of pseudouridine 5'-phosphate (PsiMP) to ribose 5-phosphate and uracil. Functions biologically in the cleavage direction, as part of a pseudouridine degradation pathway. The chain is Pseudouridine-5'-phosphate glycosidase from Gemmatimonas aurantiaca (strain DSM 14586 / JCM 11422 / NBRC 100505 / T-27).